The primary structure comprises 1450 residues: ABC transporter G family member 37 (1450 aa).

The ABC transporter 1 domain maps to 175–447; sequence VKLTGAKTHE…FEDCGFRCPE (273 aa). 207–214 provides a ligand contact to ATP; the sequence is GPPSCGKT. One can recognise an ABC transmembrane type-2 1 domain in the interval 525–737; that stretch reads ELFIACISRE…GEIGLSVNEF (213 aa). The next 6 helical transmembrane spans lie at 544 to 564, 581 to 601, 615 to 635, 661 to 681, 687 to 707, and 773 to 793; these read VYIF…TVFI, ALFF…SMTA, FYPA…LSFF, FILL…LAAI, ASIT…GFVI, and LCAL…ALTF. A disordered region spans residues 810–838; that stretch reads SELQGTEKSTEDSSVRKKTTDSPVKTEEE. The span at 817-838 shows a compositional bias: basic and acidic residues; the sequence is KSTEDSSVRKKTTDSPVKTEEE. An ABC transporter 2 domain is found at 850–1103; the sequence is VTFQDLNYFV…IIEYFESVPE (254 aa). 895-902 lines the ATP pocket; it reads GVSGAGKT. In terms of domain architecture, ABC transmembrane type-2 2 spans 1175-1389; that stretch reads GQFKSILWKM…TLNGFISSQY (215 aa). The next 7 helical transmembrane spans lie at 1194 to 1214, 1226 to 1246, 1282 to 1302, 1313 to 1333, 1339 to 1359, 1365 to 1385, and 1422 to 1442; these read YNLM…ALFW, MFTV…NNCA, IPYI…MIGF, LYSM…LVSI, VAAI…GFLI, PGWW…NGFI, and VTAV…AFFV.

This sequence belongs to the ABC transporter superfamily. ABCG family. PDR (TC 3.A.1.205) subfamily. Expressed in roots and, to a lower extent, in seedlings.

Its subcellular location is the cell membrane. In terms of biological role, together with ABCG36, regulates auxin homeostasis and responses by playing a dual role in coumarin (and derivatives) and in the auxin precursor indole 3-butyric acid (IBA) efflux transport, thus influencing roots and root hairs development. Mediates coumarin exudation in the rhizosphere, especially in iron (Fe) deficient conditions, with a strong specificity for highly oxygenated compounds such as scopoletin and derivatives, dihydroxyscopoletin, esculetin, fraxin, fraxetin and esculin; these molecules improve plant Fe nutrition. Involved in the cellular detoxification of xenobiotics by promoting the excretion of some auxinic herbicides including 2,4-dichlorophenoxyacetic acid (2,4-D), 4-(2,4-dichlorophenoxy)butyric acid (2,4-DB) and other members of the phenoxyalkanoic acid family as well as the polar auxin transport inhibitor, napthylphthalamic acid (NPA). May be a general defense protein. The chain is ABC transporter G family member 37 from Arabidopsis thaliana (Mouse-ear cress).